Here is a 1175-residue protein sequence, read N- to C-terminus: DNA-directed RNA polymerase subunit beta (1175 aa).

Residues 1142 to 1175 (PMELSGSDDDEFDQAGASLGINLSRDERSDADIA) form a disordered region. Positions 1165–1175 (SRDERSDADIA) are enriched in basic and acidic residues.

It belongs to the RNA polymerase beta chain family. In terms of assembly, the RNAP catalytic core consists of 2 alpha, 1 beta, 1 beta' and 1 omega subunit. When a sigma factor is associated with the core the holoenzyme is formed, which can initiate transcription.

The enzyme catalyses RNA(n) + a ribonucleoside 5'-triphosphate = RNA(n+1) + diphosphate. Functionally, DNA-dependent RNA polymerase catalyzes the transcription of DNA into RNA using the four ribonucleoside triphosphates as substrates. The sequence is that of DNA-directed RNA polymerase subunit beta from Corynebacterium diphtheriae (strain ATCC 700971 / NCTC 13129 / Biotype gravis).